The following is a 1209-amino-acid chain: DNA-directed RNA polymerase subunit beta' (1209 aa).

Zn(2+)-binding residues include Cys-60, Cys-62, Cys-75, and Cys-78. Mg(2+) is bound by residues Asp-450, Asp-452, and Asp-454. Residues Cys-819, Cys-893, Cys-900, and Cys-903 each coordinate Zn(2+).

The protein belongs to the RNA polymerase beta' chain family. As to quaternary structure, the RNAP catalytic core consists of 2 alpha, 1 beta, 1 beta' and 1 omega subunit. When a sigma factor is associated with the core the holoenzyme is formed, which can initiate transcription. Mg(2+) is required as a cofactor. It depends on Zn(2+) as a cofactor.

It carries out the reaction RNA(n) + a ribonucleoside 5'-triphosphate = RNA(n+1) + diphosphate. Functionally, DNA-dependent RNA polymerase catalyzes the transcription of DNA into RNA using the four ribonucleoside triphosphates as substrates. In Streptococcus mutans serotype c (strain ATCC 700610 / UA159), this protein is DNA-directed RNA polymerase subunit beta'.